The following is a 469-amino-acid chain: GTPase Der (469 aa).

2 consecutive EngA-type G domains span residues 3-166 (PVIA…PEDE) and 177-350 (LRLA…ESAN). Residues 9-16 (GRPNVGKS), 56-60 (DTGGI), 118-121 (NKVD), 183-190 (GRPNVGKS), 230-234 (DTAGV), and 295-298 (NKWD) contribute to the GTP site. The KH-like domain occupies 351–435 (LKVSPAKLTQ…PVKIEFKTSE (85 aa)).

This sequence belongs to the TRAFAC class TrmE-Era-EngA-EngB-Septin-like GTPase superfamily. EngA (Der) GTPase family. As to quaternary structure, associates with the 50S ribosomal subunit.

Functionally, GTPase that plays an essential role in the late steps of ribosome biogenesis. The polypeptide is GTPase Der (Acinetobacter baumannii (strain SDF)).